Consider the following 300-residue polypeptide: m7GpppN-mRNA hydrolase NUDT17 (300 aa).

In terms of domain architecture, Nudix hydrolase spans 88 to 239 (SRGVDVGVAV…KECVQIPADL (152 aa)). The short motif at 127–148 (GHVELDEKLLDAGLRELLEETG) is the Nudix box element. Mg(2+) contacts are provided by Glu142 and Glu146.

This sequence belongs to the Nudix hydrolase family. It depends on Mg(2+) as a cofactor. The cofactor is Mn(2+).

It catalyses the reaction a 5'-end (N(7)-methyl 5'-triphosphoguanosine)-ribonucleoside in mRNA + H2O = N(7)-methyl-GDP + a 5'-end phospho-ribonucleoside in mRNA + 2 H(+). In terms of biological role, acts as a decapping enzyme capable of hydrolyzing monomethylated capped RNAs (in vitro). Hydrolyzes monomethylated capped RNA after alpha and beta phosphates to form N(7)-methyl-GDP. Shows low activity towards unmethylated capped RNA. The protein is m7GpppN-mRNA hydrolase NUDT17 (nudt17) of Danio rerio (Zebrafish).